Reading from the N-terminus, the 159-residue chain is Flagellar assembly factor FliW (159 aa).

Belongs to the FliW family. Interacts with translational regulator CsrA and flagellin(s).

It is found in the cytoplasm. Acts as an anti-CsrA protein, binds CsrA and prevents it from repressing translation of its target genes, one of which is flagellin. Binds to flagellin and participates in the assembly of the flagellum. This chain is Flagellar assembly factor FliW, found in Geobacter sulfurreducens (strain ATCC 51573 / DSM 12127 / PCA).